The primary structure comprises 319 residues: tRNA (guanine-N(7)-)-methyltransferase (319 aa).

S-adenosyl-L-methionine-binding residues include Glu-28, Glu-51, and Asp-75. Substrate is bound by residues Asp-134 and 167–170 (TKYE).

This sequence belongs to the class I-like SAM-binding methyltransferase superfamily. TrmB family.

It carries out the reaction guanosine(46) in tRNA + S-adenosyl-L-methionine = N(7)-methylguanosine(46) in tRNA + S-adenosyl-L-homocysteine. Its pathway is tRNA modification; N(7)-methylguanine-tRNA biosynthesis. In terms of biological role, catalyzes the formation of N(7)-methylguanine at position 46 (m7G46) in tRNA. This chain is tRNA (guanine-N(7)-)-methyltransferase, found in Coprothermobacter proteolyticus (strain ATCC 35245 / DSM 5265 / OCM 4 / BT).